A 231-amino-acid chain; its full sequence is DNA repair protein RecO (231 aa).

This sequence belongs to the RecO family.

In terms of biological role, involved in DNA repair and RecF pathway recombination. This is DNA repair protein RecO from Coxiella burnetii (strain CbuK_Q154) (Coxiella burnetii (strain Q154)).